Consider the following 336-residue polypeptide: Fructose-1,6-bisphosphatase class 2 (336 aa).

Aspartate 33, glutamate 57, aspartate 85, and glutamate 88 together coordinate Mn(2+). Residues 88–90 (EGT), tyrosine 119, 164–166 (KPR), 186–188 (DGD), and glycine 210 each bind substrate. Residue glutamate 213 coordinates Mn(2+).

Belongs to the FBPase class 2 family. In terms of assembly, homodimer. The cofactor is Mn(2+).

It is found in the cytoplasm. The catalysed reaction is beta-D-fructose 1,6-bisphosphate + H2O = beta-D-fructose 6-phosphate + phosphate. It participates in carbohydrate biosynthesis; gluconeogenesis. Functionally, catalyzes the hydrolysis of fructose 1,6-bisphosphate to fructose 6-phosphate. The sequence is that of Fructose-1,6-bisphosphatase class 2 (glpX) from Shigella flexneri.